The primary structure comprises 299 residues: Transcription factor srbB (299 aa).

Disordered regions lie at residues 1–33 and 81–204; these read MAYNNRPDASTAFTFDNDDRFVNQQPKGPDPLS and ISGF…NAAK. Over residues 161–170 the composition is skewed to low complexity; the sequence is PVTSQATTSP. A compositionally biased stretch (polar residues) spans 188–199; it reads RSLSTDSQTATG. A basic motif region spans residues 203 to 216; it reads AKRAAHNIIEKRYR. Residues 203-264 enclose the bHLH domain; the sequence is AKRAAHNIIE…TNAIAYMQEL (62 aa). Residues 217 to 264 form a helix-loop-helix motif region; it reads TNMNAKFVALEKAMSGSGVQKPTKGGSGPASLKKSEILTNAIAYMQEL. Residues 254-281 adopt a coiled-coil conformation; that stretch reads LTNAIAYMQELQDQNAALQKELALLKQN.

Its subcellular location is the nucleus. In terms of biological role, key transcription factors critical for hypoxia adaptation and virulence. Plays a major role in regulation of heme biosynthesis and carbohydrate metabolism early in the response to hypoxia. In Aspergillus fumigatus (strain ATCC MYA-4609 / CBS 101355 / FGSC A1100 / Af293) (Neosartorya fumigata), this protein is Transcription factor srbB.